The following is a 573-amino-acid chain: (R)-mandelonitrile lyase 3 (573 aa).

The N-terminal stretch at 1–27 (MVKSTMSAVLLVLHIFVLHLQYSEVQS) is a signal peptide. Residue Asn30 is glycosylated (N-linked (GlcNAc...) asparagine). An FAD-binding site is contributed by 63–64 (TA). Asn75 is a glycosylation site (N-linked (GlcNAc...) asparagine). Residues 82–83 (ER), Val129, Thr133, and 137–140 (NAGV) contribute to the FAD site. Residues Asn145, Asn150, Asn162, and Asn218 are each glycosylated (N-linked (GlcNAc...) asparagine). Residue Val244 coordinates FAD. Residues Asn252, Asn267, and Asn309 are each glycosylated (N-linked (GlcNAc...) asparagine). Cys356 is a binding site for substrate. N-linked (GlcNAc...) asparagine glycans are attached at residues Asn380, Asn402, Asn420, and Asn467. A disulfide bridge connects residues Cys427 and Cys478. A substrate-binding site is contributed by Tyr485. Residues 486-487 (WH) and Gly515 contribute to the FAD site. The active-site Proton donor is His487. His525 functions as the Proton acceptor in the catalytic mechanism. Residue 526–527 (PQ) coordinates FAD.

The protein belongs to the GMC oxidoreductase family. In terms of assembly, monomer. Requires FAD as cofactor.

Its subcellular location is the vacuole. It localises to the aleurone grain. It catalyses the reaction (R)-mandelonitrile = benzaldehyde + hydrogen cyanide. Its function is as follows. Involved in cyanogenesis, the release of HCN from injured tissues. Catalyzes the stereospecific addition of HCN to a variety of aldehydes in vitro. It is a major seed constituent, and could have the additional role of a storage form for reduced nitrogen. The polypeptide is (R)-mandelonitrile lyase 3 (MDL3) (Prunus serotina (Black cherry)).